The sequence spans 265 residues: Shikimate dehydrogenase (NADP(+)) (265 aa).

Shikimate-binding positions include 15–17 (SLS) and T62. K66 acts as the Proton acceptor in catalysis. 2 residues coordinate shikimate: N87 and D102. NADP(+) is bound by residues 125–129 (GAGGA), 149–154 (NRTLEK), and L209. Y211 is a binding site for shikimate. Position 233 (G233) interacts with NADP(+).

The protein belongs to the shikimate dehydrogenase family. Homodimer.

It catalyses the reaction shikimate + NADP(+) = 3-dehydroshikimate + NADPH + H(+). It participates in metabolic intermediate biosynthesis; chorismate biosynthesis; chorismate from D-erythrose 4-phosphate and phosphoenolpyruvate: step 4/7. Functionally, involved in the biosynthesis of the chorismate, which leads to the biosynthesis of aromatic amino acids. Catalyzes the reversible NADPH linked reduction of 3-dehydroshikimate (DHSA) to yield shikimate (SA). The sequence is that of Shikimate dehydrogenase (NADP(+)) from Legionella pneumophila subsp. pneumophila (strain Philadelphia 1 / ATCC 33152 / DSM 7513).